The following is a 212-amino-acid chain: High frequency lysogenization protein HflD homolog (212 aa).

A coiled-coil region spans residues 92–128; it reads LIALERKLNAKSAALDELGKRIGQLERQLEHFELLSE.

It belongs to the HflD family.

It is found in the cytoplasm. The protein resides in the cell inner membrane. The protein is High frequency lysogenization protein HflD homolog of Pectobacterium atrosepticum (strain SCRI 1043 / ATCC BAA-672) (Erwinia carotovora subsp. atroseptica).